Consider the following 143-residue polypeptide: Competence protein ComGD (143 aa).

A propeptide spanning residues 1 to 10 (MNIKLNEEKG) is cleaved from the precursor. At Phe-11 the chain carries N-methylphenylalanine. A helical transmembrane segment spans residues 11 to 31 (FTLLESLLVLSLASILLVAVF).

In terms of assembly, the transformation pili are flexible filaments, consisting mainly of the major pilin ComGC and smaller amounts of the minor pilins, including at least ComGD, ComGF and ComGG. Interacts with ComGF. Interacts with ComGG. Post-translationally, processing of ComGD in competent cells requires ComC.

The protein resides in the cell membrane. It is found in the cell surface. In terms of biological role, required for formation of the type IV-like pilus (T4P) that plays a role in transformation. Transformation pili are dynamically extended and retracted, perhaps thereby promoting DNA uptake and transformation. Required for transformation and DNA binding. The chain is Competence protein ComGD (comGD) from Bacillus subtilis (strain 168).